The primary structure comprises 1024 residues: Unconventional myosin-Ig (1024 aa).

One can recognise a Myosin motor domain in the interval 15-713 (YGKPDFVLLD…TLVTLEQSRA (699 aa)). Residue 108-115 (GESGAGKT) participates in ATP binding. Residues 590-612 (MVALVENLASKEPFYVRCIKPNE) form an actin-binding region. The IQ domain maps to 716–745 (IPIIVLLLQKAWRGTLARWHCRRLRAIYTI). The 194-residue stretch at 830–1023 (GLRQDWGCQR…RSTFTLLWPS (194 aa)) folds into the TH1 domain. A disordered region spans residues 999 to 1024 (VEPRPEQPEPDFQSSRSTFTLLWPSH).

Belongs to the TRAFAC class myosin-kinesin ATPase superfamily. Myosin family. As to quaternary structure, interacts with calmodulin; via its IQ motifs. As to expression, specifically expressed in hematopoietic cells. Detected in adult tissues of the immune system such as thymus, lymph nodes and spleen, but not in brain, lung, heart, liver, small intestine, testis and kidney (at protein level). Highly expressed in T-lymphocytes; constitutes the most highly expressed class I myosin in naive CD4 and CD8 T-cells. Also present in B-lymphocytes.

It is found in the cell membrane. It localises to the cell projection. Its subcellular location is the phagocytic cup. In terms of biological role, unconventional myosin required during immune response for detection of rare antigen-presenting cells by regulating T-cell migration. Unconventional myosins are actin-based motor molecules with ATPase activity and serve in intracellular movements. Acts as a regulator of T-cell migration by generating membrane tension, enforcing cell-intrinsic meandering search, thereby enhancing detection of rare antigens during lymph-node surveillance, enabling pathogen eradication. Also required in B-cells, where it regulates different membrane/cytoskeleton-dependent processes. Involved in Fc-gamma receptor (Fc-gamma-R) phagocytosis. This is Unconventional myosin-Ig (Myo1g) from Mus musculus (Mouse).